Reading from the N-terminus, the 336-residue chain is tRNA N6-adenosine threonylcarbamoyltransferase (336 aa).

Residues His111 and His115 each contribute to the Fe cation site. Substrate contacts are provided by residues 134–138, Asp167, Gly180, and Asn270; that span reads LVSGG. Residue Asp298 coordinates Fe cation.

Belongs to the KAE1 / TsaD family. Requires Fe(2+) as cofactor.

The protein resides in the cytoplasm. It catalyses the reaction L-threonylcarbamoyladenylate + adenosine(37) in tRNA = N(6)-L-threonylcarbamoyladenosine(37) in tRNA + AMP + H(+). In terms of biological role, required for the formation of a threonylcarbamoyl group on adenosine at position 37 (t(6)A37) in tRNAs that read codons beginning with adenine. Is involved in the transfer of the threonylcarbamoyl moiety of threonylcarbamoyl-AMP (TC-AMP) to the N6 group of A37, together with TsaE and TsaB. TsaD likely plays a direct catalytic role in this reaction. In Acinetobacter baumannii (strain SDF), this protein is tRNA N6-adenosine threonylcarbamoyltransferase.